Reading from the N-terminus, the 303-residue chain is Quinolinate synthase (303 aa).

Residues histidine 24 and serine 41 each contribute to the iminosuccinate site. Cysteine 86 is a binding site for [4Fe-4S] cluster. Residues 112–114 (YVN) and serine 129 contribute to the iminosuccinate site. Cysteine 172 lines the [4Fe-4S] cluster pocket. Residues 198–200 (HPE) and threonine 215 each bind iminosuccinate. Cysteine 260 serves as a coordination point for [4Fe-4S] cluster.

It belongs to the quinolinate synthase family. Type 2 subfamily. [4Fe-4S] cluster is required as a cofactor.

It is found in the cytoplasm. The enzyme catalyses iminosuccinate + dihydroxyacetone phosphate = quinolinate + phosphate + 2 H2O + H(+). Its pathway is cofactor biosynthesis; NAD(+) biosynthesis; quinolinate from iminoaspartate: step 1/1. In terms of biological role, catalyzes the condensation of iminoaspartate with dihydroxyacetone phosphate to form quinolinate. The sequence is that of Quinolinate synthase from Alkaliphilus metalliredigens (strain QYMF).